Reading from the N-terminus, the 266-residue chain is 4-hydroxy-tetrahydrodipicolinate reductase (266 aa).

10-15 (GPRGRM) is an NAD(+) binding site. An NADP(+)-binding site is contributed by Lys-38. NAD(+) is bound by residues 99–101 (GTT) and 125–128 (APNF). His-155 functions as the Proton donor/acceptor in the catalytic mechanism. A (S)-2,3,4,5-tetrahydrodipicolinate-binding site is contributed by His-156. Residue Lys-159 is the Proton donor of the active site. 165 to 166 (GT) lines the (S)-2,3,4,5-tetrahydrodipicolinate pocket.

It belongs to the DapB family.

It localises to the cytoplasm. The enzyme catalyses (S)-2,3,4,5-tetrahydrodipicolinate + NAD(+) + H2O = (2S,4S)-4-hydroxy-2,3,4,5-tetrahydrodipicolinate + NADH + H(+). It carries out the reaction (S)-2,3,4,5-tetrahydrodipicolinate + NADP(+) + H2O = (2S,4S)-4-hydroxy-2,3,4,5-tetrahydrodipicolinate + NADPH + H(+). It functions in the pathway amino-acid biosynthesis; L-lysine biosynthesis via DAP pathway; (S)-tetrahydrodipicolinate from L-aspartate: step 4/4. Its function is as follows. Catalyzes the conversion of 4-hydroxy-tetrahydrodipicolinate (HTPA) to tetrahydrodipicolinate. The polypeptide is 4-hydroxy-tetrahydrodipicolinate reductase (Bacillus thuringiensis subsp. konkukian (strain 97-27)).